Consider the following 548-residue polypeptide: Kinetochore and Eb1-associated basic protein (548 aa).

2 disordered regions span residues 1-51 (MSSM…PKHP) and 82-181 (YRSS…IRPK). Basic and acidic residues-rich tracts occupy residues 20–29 (RTKELLERQR), 104–116 (RTWE…EFRS), and 127–141 (PRPR…DLRS). The tract at residues 100 to 253 (QNRQRTWEGP…TTSKRKLDFK (154 aa)) is important for kinetochore and microtubule localization. Over residues 144–155 (QGTPATKIPSQR) the composition is skewed to polar residues. Residues 149 to 152 (TKIP) carry the SXIP motif 1 motif. Residues 156 to 165 (NPKENQELSK) show a composition bias toward basic and acidic residues. Residues 166–175 (SHTCIPSSEP) show a composition bias toward polar residues. The short motif at 168–171 (TCIP) is the SXIP motif 2 element. Residues 237–372 (SDKGIKLTTS…MCALPVVSEK (136 aa)) are CH (calponin-homology)-like region, which is not required for kinetochore and microtubule localization. The stretch at 386–457 (YDVMSLQQKF…LQLQRLRLQE (72 aa)) forms a coiled coil.

Interacts with Eb1 via the two SxIP motifs; the interaction is not required for kebab kinetochore localization.

It is found in the cytoplasm. Its subcellular location is the perinuclear region. The protein resides in the chromosome. The protein localises to the centromere. It localises to the kinetochore. It is found in the cytoskeleton. Its subcellular location is the spindle. In Drosophila melanogaster (Fruit fly), this protein is Kinetochore and Eb1-associated basic protein.